The following is a 444-amino-acid chain: Tol-Pal system protein TolB (444 aa).

A signal peptide spans M1 to A19.

This sequence belongs to the TolB family. In terms of assembly, the Tol-Pal system is composed of five core proteins: the inner membrane proteins TolA, TolQ and TolR, the periplasmic protein TolB and the outer membrane protein Pal. They form a network linking the inner and outer membranes and the peptidoglycan layer.

The protein localises to the periplasm. In terms of biological role, part of the Tol-Pal system, which plays a role in outer membrane invagination during cell division and is important for maintaining outer membrane integrity. The sequence is that of Tol-Pal system protein TolB from Rickettsia africae (strain ESF-5).